A 243-amino-acid polypeptide reads, in one-letter code: MLTFLIPTAKEMTTPKESHPHLLPQDSQAILKIMTAMTTEDLAKSYRIKEEAAKKEQQRWQDMASQQSLAYPAYQLFNGLMYRHIKRDKLTTQEQAYITQQVYITSSFYGIIPANHPIAEHRHDFHTRIKIEGQSLKSYWRPCYNQFAKEHPQVISLLSSEFDDVFSKDCKQLWISPKFMAEKEGQFKTHSTISKKARGAFLTACMENNCQTVDSLKSLVFAGFYYHPDLSTDYEFVYIKKEA.

Belongs to the UPF0246 family.

The polypeptide is UPF0246 protein M6_Spy1787 (Streptococcus pyogenes serotype M6 (strain ATCC BAA-946 / MGAS10394)).